The primary structure comprises 508 residues: Hydroxymethylglutaryl-CoA synthase, mitochondrial (508 aa).

The transit peptide at 1-37 directs the protein to the mitochondrion; that stretch reads MQRLLAPARRVLQVKRAMQETSLTPAHLLSAAQQRFS. Lys52 carries the N6-succinyllysine modification. Residues Glu80 and Ala81 each coordinate (3S)-3-hydroxy-3-methylglutaryl-CoA. An N6-acetyllysine; alternate mark is found at Lys83 and Lys118. An N6-succinyllysine; alternate mark is found at Lys83 and Lys118. The active-site Proton donor/acceptor is Glu132. 3 residues coordinate (3S)-3-hydroxy-3-methylglutaryl-CoA: Cys166, Asn204, and Thr208. Cys166 serves as the catalytic Acyl-thioester intermediate. An N6-succinyllysine modification is found at Lys221. Lys243 carries the N6-acetyllysine modification. Position 256 is an N6-acetyllysine; alternate (Lys256). At Lys256 the chain carries N6-succinyllysine; alternate. 2 residues coordinate (3S)-3-hydroxy-3-methylglutaryl-CoA: Ser258 and His301. The active-site Proton donor/acceptor is the His301. At Lys306 the chain carries N6-acetyllysine. Lys310 provides a ligand contact to (3S)-3-hydroxy-3-methylglutaryl-CoA. N6-acetyllysine; alternate is present on residues Lys310 and Lys327. N6-succinyllysine; alternate occurs at positions 310 and 327. Position 333 is an N6-succinyllysine (Lys333). An N6-acetyllysine; alternate mark is found at Lys342, Lys350, Lys354, and Lys358. Residues Lys342, Lys350, Lys354, and Lys358 each carry the N6-succinyllysine; alternate modification. 2 residues coordinate (3S)-3-hydroxy-3-methylglutaryl-CoA: Asn380 and Ser414. The residue at position 427 (Lys427) is an N6-acetyllysine. Ser433 bears the Phosphoserine mark. Lys437 is subject to N6-acetyllysine. Ser440 is subject to Phosphoserine. Lys447 carries the N6-acetyllysine; alternate modification. Residue Lys447 is modified to N6-succinyllysine; alternate. Ser456 is subject to Phosphoserine. Lys473 bears the N6-acetyllysine; alternate mark. Lys473 bears the N6-succinyllysine; alternate mark. At Ser477 the chain carries Phosphoserine.

The protein belongs to the thiolase-like superfamily. HMG-CoA synthase family. In terms of assembly, homodimer. Acetylation of Lys-427 is observed in liver mitochondria from fasted mice but not from fed mice. In terms of processing, succinylated. Desuccinylated by SIRT5. Succinylation, at least at Lys-83 and Lys-310, inhibits the enzymatic activity. In terms of tissue distribution, liver and kidney.

It localises to the mitochondrion. The catalysed reaction is acetoacetyl-CoA + acetyl-CoA + H2O = (3S)-3-hydroxy-3-methylglutaryl-CoA + CoA + H(+). The protein operates within metabolic intermediate biosynthesis; (R)-mevalonate biosynthesis; (R)-mevalonate from acetyl-CoA: step 2/3. Catalyzes the first irreversible step in ketogenesis, condensing acetyl-CoA to acetoacetyl-CoA to form HMG-CoA, which is converted by HMG-CoA reductase (HMGCR) into mevalonate. The protein is Hydroxymethylglutaryl-CoA synthase, mitochondrial (Hmgcs2) of Mus musculus (Mouse).